The chain runs to 342 residues: Serpentine receptor class delta-33 (342 aa).

The next 7 helical transmembrane spans lie at 26-46 (IFVITVTILTSIGFLLNLLLL), 62-82 (IFLANTTITQLVYALFAVTSM), 112-132 (YVGILHLSLNSFISLMLSMIY), 148-168 (IILCIIGYFFPFLIFASCSNI), 205-225 (LIILTLAVTCGLVPIYFVMYW), 261-281 (IIPLVSVFPASIFWCLSQLGF), and 287-307 (YSYFIIPCLSLGCIADPVVTI).

Belongs to the nematode receptor-like protein srd family.

It localises to the membrane. The chain is Serpentine receptor class delta-33 (srd-33) from Caenorhabditis elegans.